A 105-amino-acid chain; its full sequence is Serine protease inhibitor Kazal-type 6 (105 aa).

The N-terminal stretch at 1–23 is a signal peptide; that stretch reads MKVAGVFLLLSLALLCFFSGEFS. Gln24 is subject to Pyrrolidone carboxylic acid. One can recognise a Kazal-like domain in the interval 49–105; that stretch reads RLFQINCGEFRDPKVFCTRESDPLCGSDGQTYGNKCAFCKALEKSSGKINLKHRGKC. Intrachain disulfides connect Cys55–Cys87, Cys65–Cys84, and Cys73–Cys105.

Its subcellular location is the secreted. Functionally, serine protease inhibitor selective for kallikreins. Efficiently inhibits KLK4, KLK5, KLK6, KLK7, KLK12, KLK13 and KLK14. Doesn't inhibit KLK8. In Rattus norvegicus (Rat), this protein is Serine protease inhibitor Kazal-type 6 (Spink6).